A 305-amino-acid polypeptide reads, in one-letter code: tRNA dimethylallyltransferase (305 aa).

8–15 (GPTAVGKT) is an ATP binding site. Residue 10-15 (TAVGKT) coordinates substrate. The segment at 33–36 (DSRQ) is interaction with substrate tRNA.

This sequence belongs to the IPP transferase family. Monomer. Mg(2+) serves as cofactor.

The catalysed reaction is adenosine(37) in tRNA + dimethylallyl diphosphate = N(6)-dimethylallyladenosine(37) in tRNA + diphosphate. Functionally, catalyzes the transfer of a dimethylallyl group onto the adenine at position 37 in tRNAs that read codons beginning with uridine, leading to the formation of N6-(dimethylallyl)adenosine (i(6)A). This Thermotoga sp. (strain RQ2) protein is tRNA dimethylallyltransferase.